The chain runs to 453 residues: Carbamoyl phosphate synthase arginine-specific small chain (453 aa).

A mitochondrion-targeting transit peptide spans 1–33 (MFSRLAARLPKASALNGVAARQVRNLSQPAITG). The interval 26–50 (LSQPAITGSKGRNMPAREPRTTAAA) is disordered. L-glutamine is bound by residues Ser-97, Gly-280, and Gly-282. The region spanning 233 to 420 (HVALIDCGVK…MENVELFKSN (188 aa)) is the Glutamine amidotransferase type-1 domain. Residue Cys-309 is the Nucleophile of the active site. Leu-310, Gln-313, Asn-351, Gly-353, and Tyr-354 together coordinate L-glutamine. Catalysis depends on residues His-393 and Glu-395.

This sequence belongs to the CarA family. As to quaternary structure, heterodimer composed of 2 chains; the small (or glutamine) chain promotes the hydrolysis of glutamine to ammonia, which is used by the large (or ammonia) chain to synthesize carbamoyl phosphate.

It localises to the mitochondrion matrix. It catalyses the reaction hydrogencarbonate + L-glutamine + 2 ATP + H2O = carbamoyl phosphate + L-glutamate + 2 ADP + phosphate + 2 H(+). The catalysed reaction is L-glutamine + H2O = L-glutamate + NH4(+). It participates in amino-acid biosynthesis; L-arginine biosynthesis; carbamoyl phosphate from bicarbonate: step 1/1. Its function is as follows. Small subunit of the arginine-specific carbamoyl phosphate synthase (CPSase). CPSase catalyzes the formation of carbamoyl phosphate from the ammonia moiety of glutamine, carbonate, and phosphate donated by ATP, the first step of the arginine biosynthetic pathway. The small subunit (glutamine amidotransferase) binds and cleaves glutamine to supply the large subunit with the substrate ammonia. The chain is Carbamoyl phosphate synthase arginine-specific small chain (arg-2) from Neurospora crassa (strain ATCC 24698 / 74-OR23-1A / CBS 708.71 / DSM 1257 / FGSC 987).